The primary structure comprises 631 residues: 1-deoxy-D-xylulose-5-phosphate synthase (631 aa).

Thiamine diphosphate-binding positions include His-87 and Gly-128–Ser-130. Position 159 (Asp-159) interacts with Mg(2+). Thiamine diphosphate is bound by residues Gly-160 to Ala-161, Asn-188, Phe-295, and Glu-377. Asn-188 contributes to the Mg(2+) binding site.

This sequence belongs to the transketolase family. DXPS subfamily. In terms of assembly, homodimer. Mg(2+) is required as a cofactor. The cofactor is thiamine diphosphate.

It catalyses the reaction D-glyceraldehyde 3-phosphate + pyruvate + H(+) = 1-deoxy-D-xylulose 5-phosphate + CO2. Its pathway is metabolic intermediate biosynthesis; 1-deoxy-D-xylulose 5-phosphate biosynthesis; 1-deoxy-D-xylulose 5-phosphate from D-glyceraldehyde 3-phosphate and pyruvate: step 1/1. Functionally, catalyzes the acyloin condensation reaction between C atoms 2 and 3 of pyruvate and glyceraldehyde 3-phosphate to yield 1-deoxy-D-xylulose-5-phosphate (DXP). The polypeptide is 1-deoxy-D-xylulose-5-phosphate synthase (Pseudomonas putida (strain GB-1)).